A 356-amino-acid chain; its full sequence is Glycerol-3-phosphate dehydrogenase [NAD(P)+] (356 aa).

Residues Trp12, Arg32, Arg33, and Lys117 each contribute to the NADPH site. The sn-glycerol 3-phosphate site is built by Lys117, Gly151, and Ser153. NADPH is bound at residue Ala155. Positions 206, 265, 276, and 277 each coordinate sn-glycerol 3-phosphate. Lys206 acts as the Proton acceptor in catalysis. Arg276 is an NADPH binding site. NADPH contacts are provided by Leu309 and Glu311.

The protein belongs to the NAD-dependent glycerol-3-phosphate dehydrogenase family.

It localises to the cytoplasm. The enzyme catalyses sn-glycerol 3-phosphate + NAD(+) = dihydroxyacetone phosphate + NADH + H(+). It catalyses the reaction sn-glycerol 3-phosphate + NADP(+) = dihydroxyacetone phosphate + NADPH + H(+). The protein operates within membrane lipid metabolism; glycerophospholipid metabolism. Functionally, catalyzes the reduction of the glycolytic intermediate dihydroxyacetone phosphate (DHAP) to sn-glycerol 3-phosphate (G3P), the key precursor for phospholipid synthesis. This chain is Glycerol-3-phosphate dehydrogenase [NAD(P)+], found in Treponema pallidum (strain Nichols).